Consider the following 369-residue polypeptide: Molybdenum import ATP-binding protein ModC (369 aa).

The ABC transporter domain maps to 4–239; sequence LQLRAVVADR…PRSRFGARIA (236 aa). Residue 31–38 coordinates ATP; the sequence is GPNGAGKS. The Mop domain occupies 293-361; that stretch reads HGSPRNIVGL…VKAQEVALHP (69 aa).

This sequence belongs to the ABC transporter superfamily. Molybdate importer (TC 3.A.1.8) family. In terms of assembly, the complex is composed of two ATP-binding proteins (ModC), two transmembrane proteins (ModB) and a solute-binding protein (ModA).

It is found in the cell membrane. The enzyme catalyses molybdate(out) + ATP + H2O = molybdate(in) + ADP + phosphate + H(+). Part of the ABC transporter complex ModABC involved in molybdenum import. Responsible for energy coupling to the transport system. This Mycobacterium tuberculosis (strain CDC 1551 / Oshkosh) protein is Molybdenum import ATP-binding protein ModC.